We begin with the raw amino-acid sequence, 166 residues long: MFSRQFGRLATLALALAVAGCAGGEQSTTAEAPSEPAPVAKPDVVSAATGELSNFSTADLKQAKKLFQAECGRCHVGGQTYGTYNSTDVSLSYDALTNATPPRNTVAGLVDYMKKPTSYDGRTDLLKTGEHASFTGLGDEKLRLIAGHIIKEATSNPNWGQGKDTR.

The N-terminal stretch at 1–32 (MFSRQFGRLATLALALAVAGCAGGEQSTTAEA) is a signal peptide. Heme c-binding residues include Cys71, Cys74, and His75.

It belongs to the cytochrome c family. PsbV subfamily. Heme c is required as a cofactor.

The protein resides in the cell inner membrane. In terms of biological role, probable low-potential cytochrome c, might function in photosystem II (PSII). In Gloeobacter violaceus (strain ATCC 29082 / PCC 7421), this protein is Cytochrome c-550 2 (psbV2).